A 232-amino-acid polypeptide reads, in one-letter code: MRIDINRIEKEEDIKLLKELKWNGFVFYQYDDEFSKDRYEEVKAIAESYKLKVYSGVKIKTESSKQLRDKVKKFRNKCHIILIEGGVLKINRAAVELHDVDILSTPELGRKDSGIDHVLARLASNHRVAIELNFKTLLNKDGYERARTLLFFRNNLKLAKKFDVPVVISTDAENKYQIKNPYDLRAFLNTLVEPLYAKKIMETAYKICDFRDYLMRDNVVRYGVEIIKEEKE.

The protein belongs to the eukaryotic/archaeal RNase P protein component 3 family. As to quaternary structure, consists of a catalytic RNA component and at least 4-5 protein subunits. Forms a subcomplex with Rnp2 which stimulates the catalytic RNA.

The protein localises to the cytoplasm. It carries out the reaction Endonucleolytic cleavage of RNA, removing 5'-extranucleotides from tRNA precursor.. Its function is as follows. Part of ribonuclease P, a protein complex that generates mature tRNA molecules by cleaving their 5'-ends. This Methanocaldococcus jannaschii (strain ATCC 43067 / DSM 2661 / JAL-1 / JCM 10045 / NBRC 100440) (Methanococcus jannaschii) protein is Ribonuclease P protein component 3.